The following is a 249-amino-acid chain: ATP synthase subunit a (249 aa).

The next 6 membrane-spanning stretches (helical) occupy residues 26 to 46 (FTNVSAFMVATVVLASGFLYL), 84 to 104 (FFPFVFSLFMFVLVANFIGLF), 114 to 134 (IIVTFALSLLVIGTVIFYGFF), 143 to 163 (LFVPSGVPGIIVPLVVLIEII), 185 to 205 (ITLKVFAGFVVSLSSLGALGI), and 208 to 228 (AVLPLLMTVAITALEFLVAFL).

Belongs to the ATPase A chain family. In terms of assembly, F-type ATPases have 2 components, CF(1) - the catalytic core - and CF(0) - the membrane proton channel. CF(1) has five subunits: alpha(3), beta(3), gamma(1), delta(1), epsilon(1). CF(0) has three main subunits: a(1), b(2) and c(9-12). The alpha and beta chains form an alternating ring which encloses part of the gamma chain. CF(1) is attached to CF(0) by a central stalk formed by the gamma and epsilon chains, while a peripheral stalk is formed by the delta and b chains.

It localises to the cell inner membrane. Functionally, key component of the proton channel; it plays a direct role in the translocation of protons across the membrane. This Brucella canis (strain ATCC 23365 / NCTC 10854 / RM-666) protein is ATP synthase subunit a.